Here is a 61-residue protein sequence, read N- to C-terminus: Photosystem II reaction center X protein (61 aa).

Residues 26 to 46 (IGSFIAAALLIVIPATAFLIF) form a helical membrane-spanning segment.

This sequence belongs to the PsbX family. Type 2 subfamily. As to quaternary structure, PSII consists of a core antenna complex that captures photons, and an electron transfer chain that converts photonic excitation into a charge separation. PSII forms dimeric complexes.

The protein resides in the cellular thylakoid membrane. Functionally, involved in the binding and/or turnover of quinones at the Q(B) site of Photosystem II. In Prochlorococcus marinus (strain MIT 9301), this protein is Photosystem II reaction center X protein.